The chain runs to 2013 residues: Cell adhesion molecule DSCAM (2013 aa).

Positions 1–17 are cleaved as a signal peptide; that stretch reads MWILALSLFQSFANVFS. The Extracellular segment spans residues 18–1594; it reads EEPHSSLYFV…EGLTTNEGLK (1577 aa). Ig-like C2-type domains lie at 20–119, 125–216, 225–305, 313–401, 407–500, 504–592, 596–685, 690–783, and 787–883; these read PHSS…VHIK, PYTV…ARLF, PSIL…AKVI, PLKA…VQVV, PKII…ARIN, PASI…VHVT, PPFI…SQLI, PKFV…MYLT, and PAMI…LTVQ. Intrachain disulfides connect C46-C102, C145-C197, C246-C293, C335-C385, C428-C484, C525-C575, C617-C669, C711-C766, and C809-C865. N78 carries an N-linked (GlcNAc...) asparagine glycan. Residue N470 is glycosylated (N-linked (GlcNAc...) asparagine). N-linked (GlcNAc...) asparagine glycosylation occurs at N666. Fibronectin type-III domains lie at 885–982, 987–1086, 1091–1187, and 1191–1285; these read PPDP…ADEA, PPQE…TLED, PPEN…TKED, and PPAG…AKAP. N-linked (GlcNAc...) asparagine glycans are attached at residues N1160 and N1250. The Ig-like C2-type 10 domain occupies 1285 to 1377; it reads PARILTFSGT…DEIILNLQVQ (93 aa). C1307 and C1359 are disulfide-bonded. Fibronectin type-III domains are found at residues 1379 to 1473 and 1474 to 1575; these read PPDQ…TLGK and EPQF…TIPP. A helical membrane pass occupies residues 1595-1615; that stretch reads ILVTISCILVGVLLLFVLLLV. Residues 1616–2013 are Cytoplasmic-facing; that stretch reads VRRRRREQRL…NPYAKSYTLV (398 aa). The interval 1616–2013 is required for netrin-mediated axon repulsion of neuronal growth cones; sequence VRRRRREQRL…NPYAKSYTLV (398 aa). 2 disordered regions span residues 1718–1809 and 1920–2013; these read LVDV…SASS and RDLS…YTLV. Residues 1799–1809 are compositionally biased toward low complexity; sequence SSMVSTESASS. Residues 1949–1968 show a composition bias toward polar residues; it reads EASSSTSSTREGQQSWQQGA.

As to quaternary structure, homodimer; mediates homophilic interactions to promote cell adhesion. Interacts with DCC; the interaction is abolished in response to NTN1. Interacts (via extracellular domain) with NTN1. Interacts (via extracellular domain) with UNC5C (via Ig-like C2-type domain). Interacts with PTK2. Interacts with FYN. In terms of processing, phosphorylated at tyrosine residues. Phosphorylation is enhanced by NTN1. As to expression, expressed in cortical and cerebellar neurons, in cells of the external and internal granular layer and of the Purkinje cell layer (at protein level). In the retina, expressed in dopaminergic and Nos1-positive amacrine cells and most retinal ganglion cells (at protein level). Expressed in the brain with highest levels in the cortex, olfactory bulb, hippocampus, thalamus, cerebellum and spinal cord. Expressed in the retinal ganglion layer (RGL).

It is found in the cell membrane. Its subcellular location is the cell projection. The protein localises to the axon. The protein resides in the synapse. It localises to the dendrite. It is found in the growth cone. Functionally, cell adhesion molecule that plays a role in neuronal self-avoidance. Promotes repulsion between specific neuronal processes of either the same cell or the same subtype of cells. Mediates within retinal amacrine and ganglion cell subtypes both isoneuronal self-avoidance for creating an orderly dendritic arborization and heteroneuronal self-avoidance to maintain the mosaic spacing between amacrine and ganglion cell bodies. Receptor for netrin required for axon guidance independently of and in collaboration with the receptor DCC. Might also collaborate with UNC5C in NTN1-mediated axon repulsion independently of DCC. In spinal cord development plays a role in guiding commissural axons projection and pathfinding across the ventral midline to reach the floor plate upon ligand binding. Mediates intracellular signaling by stimulating the activation of MAPK8 and MAP kinase p38. Adhesion molecule that promotes lamina-specific synaptic connections in the retina: expressed in specific subsets of interneurons and retinal ganglion cells (RGCs) and promotes synaptic connectivity via homophilic interactions. The protein is Cell adhesion molecule DSCAM (Dscam) of Mus musculus (Mouse).